The following is a 419-amino-acid chain: Histidine--tRNA ligase (419 aa).

This sequence belongs to the class-II aminoacyl-tRNA synthetase family. As to quaternary structure, homodimer.

Its subcellular location is the cytoplasm. The enzyme catalyses tRNA(His) + L-histidine + ATP = L-histidyl-tRNA(His) + AMP + diphosphate + H(+). The sequence is that of Histidine--tRNA ligase from Thiobacillus denitrificans (strain ATCC 25259 / T1).